The sequence spans 196 residues: Calmodulin-like protein 4 (196 aa).

Positions Met-1–Arg-43 are disordered. The span at Phe-17–Glu-27 shows a compositional bias: basic and acidic residues. Over residues Gly-29–Ser-39 the composition is skewed to polar residues. 4 EF-hand domains span residues Asp-51–Ser-86, Pro-87–Gln-122, Asp-124–Lys-159, and Leu-160–Asp-195.

This sequence belongs to the calmodulin family. In terms of assembly, interacts with MYO7B; the interaction mediates the association of CALML4 with the IMAC/intermicrovillar adhesion complex. Interacts with MYO7A. In terms of tissue distribution, expressed in the intestinal tract. Dominant transcript in the intestinal tract.

The protein resides in the cell projection. It is found in the microvillus. Functionally, as part of the intermicrovillar adhesion complex/IMAC plays a role in epithelial brush border differentiation, controlling microvilli organization and length. Acts as a light chain for MYO7B and is required for efficient targeting of the IMAC to the tips of border brush microvilli. The chain is Calmodulin-like protein 4 from Homo sapiens (Human).